The following is a 182-amino-acid chain: Large ribosomal subunit protein uL5 (182 aa).

Belongs to the universal ribosomal protein uL5 family. In terms of assembly, part of the 50S ribosomal subunit; part of the 5S rRNA/L5/L18/L25 subcomplex. Contacts the 5S rRNA and the P site tRNA. Forms a bridge to the 30S subunit in the 70S ribosome.

In terms of biological role, this is one of the proteins that bind and probably mediate the attachment of the 5S RNA into the large ribosomal subunit, where it forms part of the central protuberance. In the 70S ribosome it contacts protein S13 of the 30S subunit (bridge B1b), connecting the 2 subunits; this bridge is implicated in subunit movement. Contacts the P site tRNA; the 5S rRNA and some of its associated proteins might help stabilize positioning of ribosome-bound tRNAs. The sequence is that of Large ribosomal subunit protein uL5 from Coxiella burnetii (strain CbuK_Q154) (Coxiella burnetii (strain Q154)).